The sequence spans 65 residues: MSYNCCCGNFSSHSCEGYLCYSGYSRGGSSYPSNLVYSTEPLISQHLPAGFLSLQGLSGDLLGNP.

Interacts with hair keratins.

In terms of biological role, in the hair cortex, hair keratin intermediate filaments are embedded in an interfilamentous matrix, consisting of hair keratin-associated proteins (KRTAP), which are essential for the formation of a rigid and resistant hair shaft through their extensive disulfide bond cross-linking with abundant cysteine residues of hair keratins. The matrix proteins include the high-sulfur and high-glycine-tyrosine keratins. The polypeptide is Keratin-associated protein 23-1 (KRTAP23-1) (Homo sapiens (Human)).